A 169-amino-acid polypeptide reads, in one-letter code: Protein pid-1 (169 aa).

A compositionally biased stretch (polar residues) spans Ser137–Ser151. Residues Ser137–Ala169 form a disordered region.

In terms of assembly, component of the pid-1 variant of the PETISCO complex (also called the pid-3, erh-2, tofu-6, and ife-3 small RNA complex) containing at least pid-1, tofu-6, ife-3, pid-3, and erh-2, which is required for the biogenesis of a class of 21 nucleotide PIWI-interacting RNAs (piRNAs) that possess a uracil residue at the 5'-end (also called 21U-RNAs). Within the complex interacts with pid-3; the interaction is direct. Within the complex interacts with erh-2. Within the complex interacts with tofu-6. Expressed predominantly in the germline (at protein level).

It is found in the cytoplasm. Its subcellular location is the nucleus. The protein localises to the perinuclear region. Its function is as follows. Component of the pid-1 variant of the PETISCO complex which is required for the biogenesis of a class of 21 nucleotide PIWI-interacting RNAs (piRNAs) that possess a uracil residue at the 5'-end (also called 21U-RNAs). Within the complex acts as an adapter which binds to the complex via erh-2. Involved in the biogenesis of 21U-RNAs which guide the piwi protein prg-1 to its DNA targets for silencing. Plays a role in small RNA-directed transgenerational epigenetic inheritance. The protein is Protein pid-1 of Caenorhabditis elegans.